The chain runs to 229 residues: Large ribosomal subunit protein uL1 (229 aa).

The protein belongs to the universal ribosomal protein uL1 family. As to quaternary structure, part of the 50S ribosomal subunit.

Its function is as follows. Binds directly to 23S rRNA. The L1 stalk is quite mobile in the ribosome, and is involved in E site tRNA release. Functionally, protein L1 is also a translational repressor protein, it controls the translation of the L11 operon by binding to its mRNA. In Latilactobacillus sakei subsp. sakei (strain 23K) (Lactobacillus sakei subsp. sakei), this protein is Large ribosomal subunit protein uL1.